The primary structure comprises 53 residues: uncharacterized protein (53 aa).

The next 2 helical transmembrane spans lie at 3 to 22 and 26 to 45; these read LFGM…GVLL and AFFF…FTVL.

It is found in the cell membrane. This is an uncharacterized protein from Bacillus subtilis (strain 168).